The primary structure comprises 143 residues: Peptide methionine sulfoxide reductase MsrB (143 aa).

The 123-residue stretch at 5 to 127 folds into the MsrB domain; it reads NEELKKKLTP…NSAALRFIPK (123 aa). The active-site Nucleophile is Cys116.

Belongs to the MsrB Met sulfoxide reductase family.

The enzyme catalyses L-methionyl-[protein] + [thioredoxin]-disulfide + H2O = L-methionyl-(R)-S-oxide-[protein] + [thioredoxin]-dithiol. The sequence is that of Peptide methionine sulfoxide reductase MsrB from Halalkalibacterium halodurans (strain ATCC BAA-125 / DSM 18197 / FERM 7344 / JCM 9153 / C-125) (Bacillus halodurans).